Reading from the N-terminus, the 436-residue chain is 3-ketoacyl-CoA thiolase (436 aa).

Cys99 functions as the Acyl-thioester intermediate in the catalytic mechanism. Residues His392 and Cys422 each act as proton acceptor in the active site.

The protein belongs to the thiolase-like superfamily. Thiolase family. Heterotetramer of two alpha chains (FadJ) and two beta chains (FadI).

The protein resides in the cytoplasm. It catalyses the reaction an acyl-CoA + acetyl-CoA = a 3-oxoacyl-CoA + CoA. Its pathway is lipid metabolism; fatty acid beta-oxidation. Catalyzes the final step of fatty acid oxidation in which acetyl-CoA is released and the CoA ester of a fatty acid two carbons shorter is formed. In Aeromonas salmonicida (strain A449), this protein is 3-ketoacyl-CoA thiolase.